The chain runs to 194 residues: uncharacterized protein (194 aa).

The region spanning 34–192 (VMQCLLGGNK…CELVDQTLFP (159 aa)) is the SIS domain.

Belongs to the SIS family. DiaA subfamily.

This is an uncharacterized protein from Haemophilus influenzae (strain ATCC 51907 / DSM 11121 / KW20 / Rd).